A 143-amino-acid polypeptide reads, in one-letter code: UPF0763 protein HH_0976 (143 aa).

Belongs to the UPF0763 family.

The polypeptide is UPF0763 protein HH_0976 (Helicobacter hepaticus (strain ATCC 51449 / 3B1)).